The chain runs to 631 residues: Tail sheath protein (631 aa).

The protein belongs to the myoviridae tail sheath protein family. As to quaternary structure, homomultimer.

The protein resides in the virion. The protein localises to the host cytoplasm. In terms of biological role, polymerizes as an extended structure around the baseplate-tail tube complex. During ejection, the sheath shifts to a contracted form, thereby making the inner tail tube protrude through the host cell envelope. This chain is Tail sheath protein, found in Salmonella typhi.